Consider the following 203-residue polypeptide: Somatotropin (203 aa).

Positions 1-17 are cleaved as a signal peptide; sequence MNRVILLLSVMCVGVSS. Gln-18 is modified (pyrrolidone carboxylic acid). 2 disulfide bridges follow: Cys-68-Cys-176 and Cys-193-Cys-201.

It belongs to the somatotropin/prolactin family.

The protein resides in the secreted. In terms of biological role, growth hormone plays an important role in growth control and is involved in the regulation of several anabolic processes. Implicated as an osmoregulatory substance important for seawater adaptation. This Verasper variegatus (Spotted flounder) protein is Somatotropin (gh).